A 556-amino-acid chain; its full sequence is Formate--tetrahydrofolate ligase (556 aa).

Threonine 65 to threonine 72 is an ATP binding site.

It belongs to the formate--tetrahydrofolate ligase family.

It carries out the reaction (6S)-5,6,7,8-tetrahydrofolate + formate + ATP = (6R)-10-formyltetrahydrofolate + ADP + phosphate. The protein operates within one-carbon metabolism; tetrahydrofolate interconversion. This chain is Formate--tetrahydrofolate ligase, found in Hyphomonas neptunium (strain ATCC 15444).